The primary structure comprises 415 residues: 3-isopropylmalate dehydratase large subunit (415 aa).

[4Fe-4S] cluster-binding residues include Cys295, Cys353, and Cys356.

Belongs to the aconitase/IPM isomerase family. LeuC type 2 subfamily. As to quaternary structure, heterodimer of LeuC and LeuD. [4Fe-4S] cluster is required as a cofactor.

The catalysed reaction is (2R,3S)-3-isopropylmalate = (2S)-2-isopropylmalate. It participates in amino-acid biosynthesis; L-leucine biosynthesis; L-leucine from 3-methyl-2-oxobutanoate: step 2/4. In terms of biological role, catalyzes the isomerization between 2-isopropylmalate and 3-isopropylmalate, via the formation of 2-isopropylmaleate. In Pyrobaculum neutrophilum (strain DSM 2338 / JCM 9278 / NBRC 100436 / V24Sta) (Thermoproteus neutrophilus), this protein is 3-isopropylmalate dehydratase large subunit.